A 40-amino-acid polypeptide reads, in one-letter code: Bacterioferritin heavy chain (40 aa).

The Ferritin-like diiron domain maps to methionine 1 to tyrosine 40. Glutamate 18 contributes to the Fe cation binding site.

Belongs to the bacterioferritin family. In terms of assembly, oligomer consisting of two types of subunits: light chain and heavy chain.

In terms of biological role, may perform analogous functions in iron detoxification and storage to that of animal ferritins. Contains approximately 750 iron atoms per molecule. The sequence is that of Bacterioferritin heavy chain from Absidia spinosa.